A 439-amino-acid chain; its full sequence is Ribosomal protein uS12 methylthiotransferase RimO (439 aa).

An MTTase N-terminal domain is found at 3–113; the sequence is HKVGFVSLGC…VVNAVHQHLP (111 aa). Residues C12, C48, C77, C144, C148, and C151 each coordinate [4Fe-4S] cluster. In terms of domain architecture, Radical SAM core spans 130–367; the sequence is LTPRHYAYLK…MQVQAEISRN (238 aa). The region spanning 370-436 is the TRAM domain; sequence KNKIGSTQTV…DYDLYGDLEY (67 aa).

The protein belongs to the methylthiotransferase family. RimO subfamily. [4Fe-4S] cluster is required as a cofactor.

It is found in the cytoplasm. The catalysed reaction is L-aspartate(89)-[ribosomal protein uS12]-hydrogen + (sulfur carrier)-SH + AH2 + 2 S-adenosyl-L-methionine = 3-methylsulfanyl-L-aspartate(89)-[ribosomal protein uS12]-hydrogen + (sulfur carrier)-H + 5'-deoxyadenosine + L-methionine + A + S-adenosyl-L-homocysteine + 2 H(+). Functionally, catalyzes the methylthiolation of an aspartic acid residue of ribosomal protein uS12. In Legionella pneumophila (strain Paris), this protein is Ribosomal protein uS12 methylthiotransferase RimO.